Reading from the N-terminus, the 37-residue chain is NAD-reducing hydrogenase HoxS subunit alpha (37 aa).

Belongs to the complex I 51 kDa subunit family. In terms of assembly, tetramer of an alpha and a gamma subunits (flavin-containing dimer), and a delta and a nickel-containing beta subunits (hydrogenase dimer). It depends on FMN as a cofactor. [4Fe-4S] cluster is required as a cofactor.

It localises to the cytoplasm. It catalyses the reaction H2 + NAD(+) = NADH + H(+). In terms of biological role, subunits alpha and gamma of HoxS constitute an NADH--oxidoreductase. The protein is NAD-reducing hydrogenase HoxS subunit alpha (hoxF) of Rhodococcus opacus (Nocardia opaca).